A 513-amino-acid chain; its full sequence is Putative zinc finger CCCH domain-containing protein 51 (513 aa).

Positions 155-180 are disordered; that stretch reads SMPRNSPNAGRNLVGHPHSSSKSSSK. Residues 170–180 show a composition bias toward low complexity; that stretch reads HPHSSSKSSSK. A C3H1-type zinc finger spans residues 176-204; sequence KSSSKPCHFHFFRGYCKKGVNCQFFHGSV. Residues 218-299 form the HTH OST-type domain; it reads SLSKLDMEIR…HGQYHVVLVE (82 aa). In terms of domain architecture, RRM spans 325-411; it reads NQIYMTFPVH…SELRMTWLKS (87 aa).

The sequence is that of Putative zinc finger CCCH domain-containing protein 51 from Oryza sativa subsp. japonica (Rice).